A 166-amino-acid polypeptide reads, in one-letter code: Seed allergenic protein RAG2 (166 aa).

Residues 1 to 26 (MASNKVVFSALLLIIVSVLAATATMA) form the signal peptide. Cystine bridges form between cysteine 41/cysteine 93, cysteine 55/cysteine 81, cysteine 63/cysteine 125, cysteine 82/cysteine 141, and cysteine 95/cysteine 153. Residue asparagine 147 is glycosylated (N-linked (GlcNAc...) asparagine).

This sequence belongs to the cereal trypsin/alpha-amylase inhibitor family. In terms of processing, five disulfide bonds are present.

Its subcellular location is the secreted. In terms of biological role, seed storage protein. This Oryza sativa subsp. japonica (Rice) protein is Seed allergenic protein RAG2 (RAG2).